The primary structure comprises 566 residues: Beta,beta-carotene 15,15'-dioxygenase (566 aa).

Residues histidine 172, histidine 237, histidine 308, and histidine 514 each contribute to the Fe cation site. A disordered region spans residues 530-566 (PAETQEVENSDHPTDPTAPELSHSENDFTAGHGGSSL).

It belongs to the carotenoid oxygenase family. Requires Fe(2+) as cofactor. As to expression, expressed in liver, kidney, small intestine and testis.

It is found in the cytoplasm. The protein resides in the cytosol. The catalysed reaction is all-trans-beta-carotene + O2 = 2 all-trans-retinal. The protein operates within cofactor metabolism; retinol metabolism. In terms of biological role, symmetrically cleaves beta-carotene into two molecules of retinal using a dioxygenase mechanism. The sequence is that of Beta,beta-carotene 15,15'-dioxygenase from Mus musculus (Mouse).